The sequence spans 198 residues: Methyl-coenzyme M reductase I operon protein C (198 aa).

MCR is composed of three subunits: alpha, beta, and gamma. The function of proteins C and D is not known.

This chain is Methyl-coenzyme M reductase I operon protein C (mcrC), found in Methanothermobacter marburgensis (strain ATCC BAA-927 / DSM 2133 / JCM 14651 / NBRC 100331 / OCM 82 / Marburg) (Methanobacterium thermoautotrophicum).